Consider the following 179-residue polypeptide: Cytochrome b6-f complex iron-sulfur subunit (179 aa).

The helical transmembrane segment at 21–43 (LLTFGTVTGVALGALYPVVNYFI) threads the bilayer. Positions 61–162 (GNDIIVSEFL…ANVSDDKLVF (102 aa)) constitute a Rieske domain. Residues cysteine 108, histidine 110, cysteine 126, and histidine 129 each contribute to the [2Fe-2S] cluster site. A disulfide bond links cysteine 113 and cysteine 128.

The protein belongs to the Rieske iron-sulfur protein family. The 4 large subunits of the cytochrome b6-f complex are cytochrome b6, subunit IV (17 kDa polypeptide, PetD), cytochrome f and the Rieske protein, while the 4 small subunits are PetG, PetL, PetM and PetN. The complex functions as a dimer. [2Fe-2S] cluster is required as a cofactor.

The protein localises to the cellular thylakoid membrane. The enzyme catalyses 2 oxidized [plastocyanin] + a plastoquinol + 2 H(+)(in) = 2 reduced [plastocyanin] + a plastoquinone + 4 H(+)(out). In terms of biological role, component of the cytochrome b6-f complex, which mediates electron transfer between photosystem II (PSII) and photosystem I (PSI), cyclic electron flow around PSI, and state transitions. The polypeptide is Cytochrome b6-f complex iron-sulfur subunit (Trichodesmium erythraeum (strain IMS101)).